Reading from the N-terminus, the 107-residue chain is MNTLELSARVLECGAMRHTPAGLPALELLLVHESEVVEAGHPRRVELTISAVALGDLALLLADTPLGTEMQVQGFLAPARKDSVKVKLHLQQARRIAGSMGRDPLVG.

The region spanning Met1–Ala97 is the SSB domain.

It belongs to the PriB family. Homodimer. Interacts with PriA and DnaT. Component of the replication restart primosome. Primosome assembly occurs via a 'hand-off' mechanism. PriA binds to replication forks, subsequently PriB then DnaT bind; DnaT then displaces ssDNA to generate the helicase loading substrate.

Its function is as follows. Involved in the restart of stalled replication forks, which reloads the replicative helicase on sites other than the origin of replication; the PriA-PriB pathway is the major replication restart pathway. During primosome assembly it facilitates complex formation between PriA and DnaT on DNA; stabilizes PriA on DNA. Stimulates the DNA unwinding activity of PriA helicase. This is Replication restart protein PriB from Bordetella parapertussis (strain 12822 / ATCC BAA-587 / NCTC 13253).